The chain runs to 3258 residues: Protein unc-80 homolog (3258 aa).

The interval 152-173 (VENQGSPGQPCQSSSNDEEENN) is disordered. The segment covering 155-166 (QGSPGQPCQSSS) has biased composition (low complexity). Position 257 is a phosphoserine (Ser257). Disordered stretches follow at residues 291–316 (RGNS…RASL), 449–468 (RKED…GKRR), 522–560 (RRGS…HGEN), 697–717 (KKSE…GAFQ), 732–784 (PAVS…TPVS), 963–1019 (PGKK…EQMQ), 1034–1076 (KSQS…ISLR), 1404–1447 (EDSK…MSNA), and 1817–1836 (AVSA…HHVP). Over residues 295-307 (FDGSLSSQTSQER) the composition is skewed to polar residues. Ser525 bears the Phosphoserine mark. Residues 698-712 (KSENKENETLEKRPS) are compositionally biased toward basic and acidic residues. A compositionally biased stretch (gly residues) spans 732–767 (PAVSGAGDGGGEEGGGGDGGGGGGDGGGGGGGGGGP). Basic and acidic residues-rich tracts occupy residues 769 to 780 (EKNDKNQEKDES) and 965 to 974 (KKVEENEQES). A compositionally biased stretch (low complexity) spans 1035-1052 (SQSAASDTSSQSEQDTSE). Residues 1066–1076 (ARSRSRRISLR) are compositionally biased toward basic residues. Basic and acidic residues predominate over residues 1417-1429 (LKSDAGVEEKKEG). 4 consecutive transmembrane segments (helical) span residues 2268 to 2288 (PFVL…DAAN), 2398 to 2418 (IAAT…VEVL), 2785 to 2805 (GLAE…LVCF), and 2831 to 2851 (LALW…FVLL). Polar residues predominate over residues 2942 to 2964 (NTGTGTVWEQDSEPSQQASQDTL). Residues 2942 to 2982 (NTGTGTVWEQDSEPSQQASQDTLSRTDEEDEENDSISMPSV) form a disordered region. Phosphoserine is present on Ser3042. Positions 3051 to 3213 (NLLVQQPLGR…DDFTGLETSS (163 aa)) are disordered. Residues 3059 to 3068 (GRKRGLRQLR) are compositionally biased toward basic residues. Residues 3088–3100 (RLSTTRRSIQPKT) are compositionally biased toward polar residues. The segment covering 3117–3129 (PEPAAAPTDALPA) has biased composition (low complexity). Acidic residues predominate over residues 3175 to 3186 (PTEEGEKEEDTE).

The protein belongs to the unc-80 family. NALCN complex consists of NALCN and auxiliary subunits, UNC79, UNC80 and NACL1. These auxiliary subunits are essential for the NALCN complex function. Interacts (via N-terminus half) with NALCN; this interaction facilitates NALCN surface localization. Interacts with UNC79. UNC80 bridges NALCN to UNC79. Post-translationally, phosphorylated on tyrosine residues. In terms of tissue distribution, moderately expressed in fetal brain, spinal cord, skeletal muscle, thymus, spleen, fetal liver, small intestine, colon, kidney and uterus. Highly expressed in adrenal gland, prostate and testis, as well as in brain and cerebellum.

It is found in the cell membrane. In terms of biological role, auxiliary subunit of the NALCN sodium channel complex, a voltage-gated ion channel responsible for the resting Na(+) permeability that controls neuronal excitability. Activated by neuropeptides substance P, neurotensin, and extracellular Ca(2+) that regulates neuronal excitability by controlling the sizes of NALCN-dependent sodium-leak current. UNC80 is essential for NALCN sensitivity to extracellular Ca(2+). The protein is Protein unc-80 homolog of Homo sapiens (Human).